The primary structure comprises 252 residues: Imidazole glycerol phosphate synthase subunit HisF (252 aa).

Catalysis depends on residues aspartate 11 and aspartate 130.

This sequence belongs to the HisA/HisF family. As to quaternary structure, heterodimer of HisH and HisF.

The protein resides in the cytoplasm. It carries out the reaction 5-[(5-phospho-1-deoxy-D-ribulos-1-ylimino)methylamino]-1-(5-phospho-beta-D-ribosyl)imidazole-4-carboxamide + L-glutamine = D-erythro-1-(imidazol-4-yl)glycerol 3-phosphate + 5-amino-1-(5-phospho-beta-D-ribosyl)imidazole-4-carboxamide + L-glutamate + H(+). It participates in amino-acid biosynthesis; L-histidine biosynthesis; L-histidine from 5-phospho-alpha-D-ribose 1-diphosphate: step 5/9. Its function is as follows. IGPS catalyzes the conversion of PRFAR and glutamine to IGP, AICAR and glutamate. The HisF subunit catalyzes the cyclization activity that produces IGP and AICAR from PRFAR using the ammonia provided by the HisH subunit. The chain is Imidazole glycerol phosphate synthase subunit HisF from Bacillus cereus (strain ATCC 10987 / NRS 248).